The primary structure comprises 334 residues: Cathepsin R (334 aa).

A signal peptide spans 1 to 17 (MAAVVFIAFLYLGVASG). Residues 18–114 (VPVLDSSLDA…SIMKREAGSI (97 aa)) constitute a propeptide, activation peptide. 2 disulfides stabilise this stretch: Cys136/Cys179 and Cys170/Cys212. Residue Cys139 is part of the active site. Residue Asn269 is glycosylated (N-linked (GlcNAc...) asparagine). A disulfide bond links Cys270 and Cys323. Active-site residues include His277 and Asn301.

This sequence belongs to the peptidase C1 family. Placenta.

It is found in the lysosome. The chain is Cathepsin R (Ctsr) from Mus musculus (Mouse).